The primary structure comprises 1068 residues: TSC22 domain family protein 1 (1068 aa).

The tract at residues 1-98 is required for interaction with TGFBR1 and promotion of TGF-beta signaling; the sequence is MHQPPESTAA…SQAQLQAQPL (98 aa). Disordered regions lie at residues 23 to 110, 125 to 288, and 602 to 623; these read AHPA…KKSG, ISSN…SPAS, and YSQA…QQLQ. The segment covering 36-55 has biased composition (low complexity); it reads GSASALNAAGTGVGSSATSS. Pro residues predominate over residues 58 to 70; sequence FPPPSLLQPPPPA. A compositionally biased stretch (low complexity) spans 84 to 100; sequence SLNLLSQAQLQAQPLAP. The span at 133-142 shows a compositional bias: acidic residues; that stretch reads EDTESYDDLD. The segment covering 216–240 has biased composition (basic residues); it reads HPHHLHHHHHIHHGHHLQHGHHHPS. Low complexity predominate over residues 241-250; sequence HVAVASASIP. The span at 261 to 271 shows a compositional bias: polar residues; it reads KLSTTGSSDSI. At S263 the chain carries Phosphoserine. The segment covering 272 to 288 has biased composition (low complexity); it reads TPVAPTSAVSSSGSPAS. Positions 609–620 are enriched in pro residues; that stretch reads VQTPLPGAPPPQ. The leucine-zipper stretch occupies residues 1000 to 1021; it reads VLKEQIKELIEKNSQLEQENNL. Positions 1032–1068 are disordered; the sequence is AQFQAQLQTGSPPATTQPQGTTQPPAQPASQGSGPTA. Low complexity predominate over residues 1039–1068; it reads QTGSPPATTQPQGTTQPPAQPASQGSGPTA.

The protein belongs to the TSC-22/Dip/Bun family. In terms of assembly, forms homodimers. Forms heterodimers. Component of a complex composed of TSC22D1 (via N-terminus), TGFBR1 and TGFBR2; the interaction between TSC22D1 and TGFBR1 is inhibited by SMAD7 and promoted by TGFB1. Interacts with SMAD7; the interaction requires TGF-beta and the interaction is inhibited by TGFBR1. Interacts with TPT1/fortilin; interaction results in the destabilization of TSC22D1 protein and prevents TSC22D1-mediated apoptosis. Interacts with SMAD4 (via N-terminus). Interacts with ACVRL1/ALK1, ACVR1/ALK2, BMPR1A/ALK3, ACVR1B/ALK4, BMPR1B/ALK6, ACVR2A/ACTRII, and BMPR2. Interacts with SMAD6. Interacts with TFE3; the interaction is enhanced in the presence of TGF-beta. As to quaternary structure, forms a heterodimer with TSC22D4/THG1. Forms a heterodimer with TSC22D4/THG1. Interacts with histone H1-2. Interacts with GNL3.

It is found in the cytoplasm. It localises to the nucleus. Its subcellular location is the cell membrane. The protein resides in the mitochondrion. In terms of biological role, transcriptional repressor. Acts on the C-type natriuretic peptide (CNP) promoter. Acts to promote CASP3-mediated apoptosis. Positively regulates TGF-beta signaling by interacting with SMAD7 which inhibits binding of SMAD7 to TGFBR1, preventing recruitment of SMURF ubiquitin ligases to TGFBR1 and inhibiting SMURF-mediated ubiquitination and degradation of TGFBR1. Contributes to enhancement of TGF-beta signaling by binding to and modulating the transcription activator activity of SMAD4. Promotes TGF-beta-induced transcription of COL1A2; via its interaction with TFE3 at E-boxes in the gene proximal promoter. Plays a role in the repression of hematopoietic precursor cell growth. Promotes IL2 deprivation-induced apoptosis in T-lymphocytes, via repression of TSC22D3/GILZ transcription and activation of the caspase cascade. May act to negatively regulate TGFB3 signaling and thereby inhibit cell death in mammary gland cells. Its function is as follows. Positively regulates cell death in response to TGFB3 during mammary gland involution. The chain is TSC22 domain family protein 1 from Macaca fascicularis (Crab-eating macaque).